Reading from the N-terminus, the 338-residue chain is GTP 3',8-cyclase (338 aa).

Residues 8 to 227 (KLQRPLKDLR…DMIHQVMPLE (220 aa)) enclose the Radical SAM core domain. Position 17 (arginine 17) interacts with GTP. The [4Fe-4S] cluster site is built by cysteine 24 and cysteine 28. Tyrosine 30 contributes to the S-adenosyl-L-methionine binding site. Residue cysteine 31 participates in [4Fe-4S] cluster binding. Arginine 71 is a GTP binding site. Residue glycine 75 participates in S-adenosyl-L-methionine binding. Threonine 102 serves as a coordination point for GTP. Serine 126 is an S-adenosyl-L-methionine binding site. Lysine 163 is a binding site for GTP. An S-adenosyl-L-methionine-binding site is contributed by methionine 197. [4Fe-4S] cluster is bound by residues cysteine 261 and cysteine 264. Residue 266–268 (RAR) coordinates GTP. Cysteine 278 contacts [4Fe-4S] cluster.

It belongs to the radical SAM superfamily. MoaA family. Monomer and homodimer. The cofactor is [4Fe-4S] cluster.

It catalyses the reaction GTP + AH2 + S-adenosyl-L-methionine = (8S)-3',8-cyclo-7,8-dihydroguanosine 5'-triphosphate + 5'-deoxyadenosine + L-methionine + A + H(+). It participates in cofactor biosynthesis; molybdopterin biosynthesis. In terms of biological role, catalyzes the cyclization of GTP to (8S)-3',8-cyclo-7,8-dihydroguanosine 5'-triphosphate. The sequence is that of GTP 3',8-cyclase from Bacillus anthracis (strain CDC 684 / NRRL 3495).